Here is a 455-residue protein sequence, read N- to C-terminus: N(5)-hydroxyornithine:cis-anhydromevalonyl coenzyme A-N(5)-transacylase SIDF (455 aa).

Residues 453–455 carry the PTS1-type peroxisomal targeting signal motif; it reads PKL.

It belongs to the lysine N-acyltransferase mbtK family.

The protein resides in the peroxisome. The protein operates within siderophore biosynthesis. In terms of biological role, hydroxyornithine transacylase; part of the gene cluster that mediates the biosynthesis of at least 11 siderophores, including beauverichelin A, dimerumic acid (DA), Na-dimethyl coprogen (NADC), eleutherazine B, ferricrocin (FC), fusarinine A, fusarinine C (FsC), metachelin A, mevalonolactone, rhodotorulic acid (RA) and tenellin. This cocktail of siderophores for iron metabolism is essential for virulence, and more specifically for the fungal virulence in penetrating through the host cuticle. Siderophore synthesis is also involved in conidial germination under iron-deficient conditions. For biosynthesis of fusarinine C, the transacylase SIDF transfers anhydromevalonyl to N(5)-hydroxyornithine. The required anhydromevalonyl-CoA moiety is derived from mevalonate by CoA ligation and dehydration catalyzed by SIDI and sidH respectively. This chain is N(5)-hydroxyornithine:cis-anhydromevalonyl coenzyme A-N(5)-transacylase SIDF, found in Beauveria bassiana (strain ARSEF 2860) (White muscardine disease fungus).